Consider the following 660-residue polypeptide: Bifunctional polymyxin resistance protein ArnA (660 aa).

Positions 1–304 are formyltransferase ArnAFT; sequence MKAIVFAYHD…DMSMVTDVRV (304 aa). His104 functions as the Proton donor; for formyltransferase activity in the catalytic mechanism. (6R)-10-formyltetrahydrofolate contacts are provided by residues Arg114 and 136-140; that span reads VLKPD. A dehydrogenase ArnADH region spans residues 314–660; sequence HRKRVLILGV…RGAVEELGKN (347 aa). Residues Asp347 and 368 to 369 each bind NAD(+); that span reads DI. UDP-alpha-D-glucuronate contacts are provided by residues Ala393, Tyr398, and 432–433; that span reads TS. The active-site Proton acceptor; for decarboxylase activity is the Glu434. Residues Arg460, Asn492, 526 to 535, and Tyr613 each bind UDP-alpha-D-glucuronate; that span reads KLVDGGEQKR. The active-site Proton donor; for decarboxylase activity is the Arg619.

This sequence in the N-terminal section; belongs to the Fmt family. UDP-L-Ara4N formyltransferase subfamily. In the C-terminal section; belongs to the NAD(P)-dependent epimerase/dehydratase family. UDP-glucuronic acid decarboxylase subfamily. As to quaternary structure, homohexamer, formed by a dimer of trimers.

The enzyme catalyses UDP-alpha-D-glucuronate + NAD(+) = UDP-beta-L-threo-pentopyranos-4-ulose + CO2 + NADH. It catalyses the reaction UDP-4-amino-4-deoxy-beta-L-arabinose + (6R)-10-formyltetrahydrofolate = UDP-4-deoxy-4-formamido-beta-L-arabinose + (6S)-5,6,7,8-tetrahydrofolate + H(+). Its pathway is nucleotide-sugar biosynthesis; UDP-4-deoxy-4-formamido-beta-L-arabinose biosynthesis; UDP-4-deoxy-4-formamido-beta-L-arabinose from UDP-alpha-D-glucuronate: step 1/3. The protein operates within nucleotide-sugar biosynthesis; UDP-4-deoxy-4-formamido-beta-L-arabinose biosynthesis; UDP-4-deoxy-4-formamido-beta-L-arabinose from UDP-alpha-D-glucuronate: step 3/3. It participates in bacterial outer membrane biogenesis; lipopolysaccharide biosynthesis. Functionally, bifunctional enzyme that catalyzes the oxidative decarboxylation of UDP-glucuronic acid (UDP-GlcUA) to UDP-4-keto-arabinose (UDP-Ara4O) and the addition of a formyl group to UDP-4-amino-4-deoxy-L-arabinose (UDP-L-Ara4N) to form UDP-L-4-formamido-arabinose (UDP-L-Ara4FN). The modified arabinose is attached to lipid A and is required for resistance to polymyxin and cationic antimicrobial peptides. The chain is Bifunctional polymyxin resistance protein ArnA from Photorhabdus laumondii subsp. laumondii (strain DSM 15139 / CIP 105565 / TT01) (Photorhabdus luminescens subsp. laumondii).